The sequence spans 236 residues: Rho-related GTP-binding protein RhoV (236 aa).

A disordered region spans residues 1 to 27; it reads MPPRELSEAEPPPLPASTPPPRRRSAP. Positions 10–20 are enriched in pro residues; sequence EPPPLPASTPP. The residue at position 25 (Ser-25) is a Phosphoserine. GTP contacts are provided by residues 38-45, 85-89, and 143-146; these read GDGAVGKS, DTAGQ, and TQAD. Residue Cys-234 is the site of S-palmitoyl cysteine attachment.

The protein belongs to the small GTPase superfamily. Rho family. In terms of assembly, interacts with PAK2. Mg(2+) serves as cofactor.

The protein resides in the cell membrane. Its subcellular location is the endosome membrane. Functionally, plays a role in the control of the actin cytoskeleton via activation of the JNK pathway. The sequence is that of Rho-related GTP-binding protein RhoV from Mus musculus (Mouse).